The following is a 283-amino-acid chain: Bis(5'-nucleosyl)-tetraphosphatase, symmetrical (283 aa).

Belongs to the Ap4A hydrolase family.

It catalyses the reaction P(1),P(4)-bis(5'-adenosyl) tetraphosphate + H2O = 2 ADP + 2 H(+). In terms of biological role, hydrolyzes diadenosine 5',5'''-P1,P4-tetraphosphate to yield ADP. In Pseudomonas fluorescens (strain SBW25), this protein is Bis(5'-nucleosyl)-tetraphosphatase, symmetrical.